The chain runs to 133 residues: Fluoride-specific ion channel FluC (133 aa).

The next 4 membrane-spanning stretches (helical) occupy residues 4–24 (LLWIALGGSLGALCRYGLSVL), 35–55 (WGTLAANLVGCFLIGGLWVLA), 66–86 (VFIFTGGIGSLTTFSTYSLES), and 107–127 (VLGLVLVAIGAGCALFLLGGP). Na(+) contacts are provided by G74 and T77.

Belongs to the fluoride channel Fluc/FEX (TC 1.A.43) family.

It is found in the cell inner membrane. The catalysed reaction is fluoride(in) = fluoride(out). With respect to regulation, na(+) is not transported, but it plays an essential structural role and its presence is essential for fluoride channel function. Fluoride-specific ion channel. Important for reducing fluoride concentration in the cell, thus reducing its toxicity. The polypeptide is Fluoride-specific ion channel FluC (Salinibacter ruber (strain DSM 13855 / M31)).